A 488-amino-acid polypeptide reads, in one-letter code: Probable malate:quinone oxidoreductase (488 aa).

The protein belongs to the MQO family. Requires FAD as cofactor.

The catalysed reaction is (S)-malate + a quinone = a quinol + oxaloacetate. The protein operates within carbohydrate metabolism; tricarboxylic acid cycle; oxaloacetate from (S)-malate (quinone route): step 1/1. This Neisseria gonorrhoeae (strain ATCC 700825 / FA 1090) protein is Probable malate:quinone oxidoreductase.